The primary structure comprises 513 residues: Histone acetyltransferase KAT5 (513 aa).

Residues 8–65 form the Tudor-knot domain; sequence IEGCRLPVLRRNQDNEDEWPLAEILSVKDISGRKLFYVHYIDFNKRLDEWVTHERLDL. Residue lysine 52 is modified to N6-acetyllysine. The disordered stretch occupies residues 69-106; the sequence is QFPKKEAKTPTKNGLPGSRPGSPEREVPASAQASGKTL. At serine 86 the chain carries Phosphoserine. A Phosphoserine; by CDK1 and CDK9 modification is found at serine 90. An N6-acetyllysine; by autocatalysis mark is found at lysine 104 and lysine 120. Positions 122-217 are disordered; it reads REAIPGGEPD…SAPRMTGSLV (96 aa). A compositionally biased stretch (polar residues) spans 133 to 144; the sequence is PLSSSSCLQPNH. 4 positions are modified to N6-acetyllysine; by autocatalysis: lysine 148, lysine 150, lysine 187, and lysine 189. Serine 199 carries the post-translational modification Phosphoserine. In terms of domain architecture, MYST-type HAT spans 227–504; sequence TRMKNIECIE…IDSKCLHFTP (278 aa). Residues 260–285 form a C2HC MYST-type zinc finger; the sequence is LYLCEFCLKYGRSLKCLQRHLTKCDL. Position 327 is an N6-acetyllysine; by autocatalysis (lysine 327). Residues 368–513 are interaction with ATF2; that stretch reads ACILTLPPYQ…PKDWSKRGKW (146 aa). Acetyl-CoA contacts are provided by residues 370–372 and 377–383; these read ILT and QRRGYGK. Catalysis depends on glutamate 403, which acts as the Proton donor/acceptor. Residues serine 407 and serine 416 each coordinate acetyl-CoA. A Glycyl lysine isopeptide (Lys-Gly) (interchain with G-Cter in SUMO1); alternate cross-link involves residue lysine 430. Lysine 430 participates in a covalent cross-link: Glycyl lysine isopeptide (Lys-Gly) (interchain with G-Cter in SUMO2); alternate. Residue lysine 451 forms a Glycyl lysine isopeptide (Lys-Gly) (interchain with G-Cter in SUMO1) linkage.

This sequence belongs to the MYST (SAS/MOZ) family. Component of the NuA4 histone acetyltransferase complex which contains the catalytic subunit KAT5/TIP60 and the subunits EP400, TRRAP/PAF400, BRD8/SMAP, EPC1, DMAP1/DNMAP1, RUVBL1/TIP49, RUVBL2, ING3, actin, ACTL6A/BAF53A, MORF4L1/MRG15, MORF4L2/MRGX, MRGBP, YEATS4/GAS41, VPS72/YL1 and MEAF6. KAT5/TIP60, EPC1, and ING3 together constitute a minimal HAT complex termed Piccolo NuA4. The NuA4 complex interacts with MYC. Interacts with ATM. Interacts with JADE1. Interacts with PLA2G4A/CPLA2, EDNRA and HDAC7. Interacts with the cytoplasmic tail of APP and APBB1/FE65. Interacts with TRIM24 and TRIM68. Forms a complex with SENP6 and UBE2I in response to UV irradiation. Identified in a complex with HINT1. Interacts with ATF2 and CUL3. Interacts with NR1D2 (via N-terminus). Component of a SWR1-like complex. Interacts with FOXP3. Interacts with ZBTB49. Interacts with SRF. Interacts with ATF3; promoting autoacetylation and deubiquitination by USP7. Interacts with EP300/p300; interaction promotes KAT5 autoacetylation. Interacts with PRKDC; interaction is impaired following KAT5 sumoylation. Interacts with GPR50. Interacts with NME3; this interaction enables recruitment of NME3 at DNA damage sites where it plays a role in the repair of DNA. Phosphorylated on Ser-86 and Ser-90; enhanced during G2/M phase. The phosphorylated form has a higher activity. Phosphorylation at Ser-90 by CDK1 or CDK9 is a prerequisite for phosphorylation at Ser-86 by GSK3. Phosphorylation at Ser-86 by GSK3 (GSK3A or GSK3B) activates acetyltransferase and acyltransferase activity. Phosphorylation at Ser-90 by CDK9 promotes KAT5 recruitment to chromatin. Phosphorylation by VRK1 following DNA damage promotes KAT5 association with chromatin and histone acetyltransferase activity. Post-translationally, autoacetylated. Autoacetylation is required for histone acetyltransferase activity. Autoacetylation at Lys-327 is facilitated by interaction with EP300/p300: it prevents ubiquitination and subsequent degradation by the proteasome and promotes acetylation of target proteins. Deacetylated by HDAC3 and SIRT1. Deacetylation by HDAC3 promotes its ubiquitination and cytoplasmic localization. In terms of processing, sumoylated by UBE2I at Lys-430 and Lys-451, leading to increase of its histone acetyltransferase activity in UV-induced DNA damage response, as well as its translocation to nuclear bodies. Sumoylation with SUMO2 by PIAS4 at Lys-430 promotes repair of DNA double-strand breaks (DSBs) via homologous recombination (HR). Sumoylation by PIAS4 impairs interaction with PRKDC, inhibiting non-homologous end joining (NHEJ)-mediated repair of DSBs, thereby facilitating HR. Desumoylated by SENP3. Ubiquitinated by MDM2, leading to its proteasome-dependent degradation. Ubiquitination is prevented by autoacetylation at Lys-327. Ubiquitinated following deacetylation by HDAC3, leading to cytoplasmic localization. Deubiquitinated by USP7 following interaction with ATF3, promoting its stabilization. Expressed in testis, heart, brain, kidney and liver. Weakly expressed in lung.

It is found in the nucleus. It localises to the chromosome. The protein localises to the cytoplasm. The protein resides in the centromere. Its subcellular location is the kinetochore. It is found in the cytoskeleton. It localises to the spindle pole. The protein localises to the nucleolus. The protein resides in the perinuclear region. The catalysed reaction is L-lysyl-[histone] + acetyl-CoA = N(6)-acetyl-L-lysyl-[histone] + CoA + H(+). The enzyme catalyses L-lysyl-[protein] + acetyl-CoA = N(6)-acetyl-L-lysyl-[protein] + CoA + H(+). It catalyses the reaction (2E)-butenoyl-CoA + L-lysyl-[protein] = N(6)-(2E)-butenoyl-L-lysyl-[protein] + CoA + H(+). It carries out the reaction 2-hydroxyisobutanoyl-CoA + L-lysyl-[protein] = N(6)-(2-hydroxyisobutanoyl)-L-lysyl-[protein] + CoA + H(+). The catalysed reaction is (S)-lactoyl-CoA + L-lysyl-[protein] = N(6)-[(S)-lactoyl]-L-lysyl-[protein] + CoA + H(+). Acyltransferase and acetyltransferase activities are activated by phosphorylation and autoacetylation. Autoacetylation activates the histone acetyltransferase activity. Catalytic subunit of the NuA4 histone acetyltransferase complex, a multiprotein complex involved in transcriptional activation of select genes principally by acetylation of nucleosomal histones H2A and H4. Histone acetylation alters nucleosome-DNA interactions and promotes interaction of the modified histones with other proteins which positively regulate transcription. The NuA4 histone acetyltransferase complex is required for the activation of transcriptional programs associated with proto-oncogene mediated growth induction, tumor suppressor mediated growth arrest and replicative senescence, apoptosis, and DNA repair. The NuA4 complex plays a direct role in repair of DNA double-strand breaks (DSBs) by promoting homologous recombination (HR): the complex inhibits TP53BP1 binding to chromatin via MBTD1, which recognizes and binds histone H4 trimethylated at 'Lys-20' (H4K20me), and KAT5 that catalyzes acetylation of 'Lys-15' of histone H2A (H2AK15ac), thereby blocking the ubiquitination mark required for TP53BP1 localization at DNA breaks. Also involved in DSB repair by mediating acetylation of 'Lys-5' of histone H2AX (H2AXK5ac), promoting NBN/NBS1 assembly at the sites of DNA damage. The NuA4 complex plays a key role in hematopoietic stem cell maintenance and is required to maintain acetylated H2A.Z/H2AZ1 at MYC target genes. The NuA4 complex is also required for spermatid development by promoting acetylation of histones: histone hyperacetylation is required for histone replacement during the transition from round to elongating spermatids. Component of a SWR1-like complex that specifically mediates the removal of histone H2A.Z/H2AZ1 from the nucleosome. Also acetylates non-histone proteins, such as BMAL1, ATM, AURKB, CHKA, CGAS, ERCC4/XPF, LPIN1, TP53/p53, NDC80/HEC1, NR1D2, RAN, SOX4, FOXP3, SQSTM1, ULK1 and RUBCNL/Pacer. Directly acetylates and activates ATM. Promotes nucleotide excision repair (NER) by mediating acetylation of ERCC4/XPF, thereby promoting formation of the ERCC4-ERCC1 complex. Relieves NR1D2-mediated inhibition of APOC3 expression by acetylating NR1D2. Acts as a regulator of regulatory T-cells (Treg) by catalyzing FOXP3 acetylation, thereby promoting FOXP3 transcriptional repressor activity. Involved in skeletal myoblast differentiation by mediating acetylation of SOX4. Catalyzes acetylation of APBB1/FE65, increasing its transcription activator activity. Promotes transcription elongation during the activation phase of the circadian cycle by catalyzing acetylation of BMAL1, promoting elongation of circadian transcripts. Together with GSK3 (GSK3A or GSK3B), acts as a regulator of autophagy: phosphorylated at Ser-86 by GSK3 under starvation conditions, leading to activate acetyltransferase activity and promote acetylation of key autophagy regulators, such as ULK1 and RUBCNL/Pacer. Acts as a regulator of the cGAS-STING innate antiviral response by catalyzing acetylation the N-terminus of CGAS, thereby promoting CGAS DNA-binding and activation. Also regulates lipid metabolism by mediating acetylation of CHKA or LPIN1. Promotes lipolysis of lipid droplets following glucose deprivation by mediating acetylation of isoform 1 of CHKA, thereby promoting monomerization of CHKA and its conversion into a tyrosine-protein kinase. Acts as a regulator of fatty-acid-induced triacylglycerol synthesis by catalyzing acetylation of LPIN1, thereby promoting the synthesis of diacylglycerol. In addition to protein acetyltransferase, can use different acyl-CoA substrates, such as (2E)-butenoyl-CoA (crotonyl-CoA), S-lactoyl-CoA (lactyl-CoA) and 2-hydroxyisobutanoyl-CoA (2-hydroxyisobutyryl-CoA), and is able to mediate protein crotonylation, lactylation and 2-hydroxyisobutyrylation, respectively. Acts as a key regulator of chromosome segregation and kinetochore-microtubule attachment during mitosis by mediating acetylation or crotonylation of target proteins. Catalyzes acetylation of AURKB at kinetochores, increasing AURKB activity and promoting accurate chromosome segregation in mitosis. Acetylates RAN during mitosis, promoting microtubule assembly at mitotic chromosomes. Acetylates NDC80/HEC1 during mitosis, promoting robust kinetochore-microtubule attachment. Catalyzes crotonylation of MAPRE1/EB1, thereby ensuring accurate spindle positioning in mitosis. Catalyzes lactylation of NBN/NBS1 in response to DNA damage, thereby promoting DNA double-strand breaks (DSBs) via homologous recombination (HR). The polypeptide is Histone acetyltransferase KAT5 (Mus musculus (Mouse)).